Reading from the N-terminus, the 168-residue chain is Phospholipase A and acyltransferase 1 (168 aa).

Residues 1–138 (MAFNDCFSLN…GEGVSEQANR (138 aa)) are Cytoplasmic-facing. Residues 20 to 135 (LIEVFRPGYQ…LRYGEGVSEQ (116 aa)) form the LRAT domain. Residue H30 is part of the active site. Catalysis depends on C119, which acts as the Acyl-thioester intermediate. Residues 139-159 (AISTVEFVTAAVGVFSFLGLF) form a helical membrane-spanning segment. Over 160–168 (PKGQRAKYY) the chain is Lumenal.

Belongs to the H-rev107 family. Abundantly expressed in testis, skeletal muscle, brain, and heart. In terms of tissue distribution, highly expressed in the testis, skeletal muscle, brain, heart, and thyroid.

It is found in the membrane. Its subcellular location is the cytoplasm. The protein localises to the nucleus. The enzyme catalyses a 1,2-diacyl-sn-glycero-3-phosphocholine + H2O = a 1-acyl-sn-glycero-3-phosphocholine + a fatty acid + H(+). The catalysed reaction is a 1,2-diacyl-sn-glycero-3-phosphocholine + H2O = a 2-acyl-sn-glycero-3-phosphocholine + a fatty acid + H(+). It catalyses the reaction 1,2-dihexadecanoyl-sn-glycero-3-phosphocholine + H2O = 2-hexadecanoyl-sn-glycero-3-phosphocholine + hexadecanoate + H(+). It carries out the reaction 1,2-dihexadecanoyl-sn-glycero-3-phosphocholine + H2O = 1-hexadecanoyl-sn-glycero-3-phosphocholine + hexadecanoate + H(+). The enzyme catalyses 1-hexadecanoyl-2-(5Z,8Z,11Z,14Z-eicosatetraenoyl)-sn-glycero-3-phosphoethanolamine + H2O = 2-(5Z,8Z,11Z,14Z)-eicosatetraenoyl-sn-glycero-3-phosphoethanolamine + hexadecanoate + H(+). The catalysed reaction is 1-hexadecanoyl-2-(5Z,8Z,11Z,14Z-eicosatetraenoyl)-sn-glycero-3-phosphoethanolamine + H2O = 1-hexadecanoyl-sn-glycero-3-phosphoethanolamine + (5Z,8Z,11Z,14Z)-eicosatetraenoate + H(+). It catalyses the reaction 1,2-di-(9Z-octadecenoyl)-sn-glycero-3-phosphoethanolamine + 1,2-dihexadecanoyl-sn-glycero-3-phosphocholine = hexadecanoyl-sn-glycero-3-phosphocholine + N-hexadecanoyl-1,2-di-(9Z-octadecenoyl)-sn-glycero-3-phosphoethanolamine + H(+). It carries out the reaction 1,2-dihexadecanoyl-sn-glycero-3-phosphocholine + a 2-acyl-sn-glycero-3-phosphocholine = a 1-hexadecanoyl-2-acyl-sn-glycero-3-phosphocholine + 2-hexadecanoyl-sn-glycero-3-phosphocholine. Functionally, exhibits both phospholipase A1/2 and acyltransferase activities. Shows phospholipase A1 (PLA1) and A2 (PLA2) activity, catalyzing the calcium-independent release of fatty acids from the sn-1 or sn-2 position of glycerophospholipids. Shows O-acyltransferase activity, catalyzing the transfer of a fatty acyl group from glycerophospholipid to the hydroxyl group of lysophospholipid. Shows N-acyltransferase activity, catalyzing the calcium-independent transfer of a fatty acyl group at the sn-1 position of phosphatidylcholine (PC) and other glycerophospholipids to the primary amine of phosphatidylethanolamine (PE), forming N-acylphosphatidylethanolamine (NAPE) which serves as precursor for N-acylethanolamines (NAEs). The chain is Phospholipase A and acyltransferase 1 from Homo sapiens (Human).